We begin with the raw amino-acid sequence, 340 residues long: Erythroferrone (340 aa).

An N-terminal signal peptide occupies residues 1-24; that stretch reads MASTRRPVGARTLLACASLLAAMG. Disordered regions lie at residues 30 to 63, 79 to 112, and 141 to 161; these read SAEP…IAHA, SDKG…GPPG, and HCTR…PAAQ. The span at 40-58 shows a compositional bias: pro residues; it reads PQPPGAELPAPPANSPPEP. The segment covering 84-95 has biased composition (basic residues); the sequence is NSKRRSKARRLK. A hydroxyproline mark is found at P99, P101, P102, P104, P105, and P107. A compositionally biased stretch (pro residues) spans 99 to 112; the sequence is PGPPGPPGPQGPPG. The segment covering 145 to 154 has biased composition (polar residues); sequence DLTTPASGSP. The C1q domain maps to 185–340; that stretch reads APRVEAAFHC…SHFSAILLGL (156 aa). N229, N281, N292, and N319 each carry an N-linked (GlcNAc...) asparagine glycan.

This sequence belongs to the adipolin/erythroferrone family. As to quaternary structure, homodimer; disulfide-linked. Forms trimer, hexamers and higher molecular weight oligomers. May form heteromeric complexes with C1QTNF2 and C1QTNF12 and, to a lesser extent, with C1QTNF5 and C1QTNF10. Interacts with BMP5 and BMP7; the interaction inhibits BMP-induced transcription of HAMP. Interacts with BMP6; the interaction inhibits BMP-induced transcription of HAMP. Interacts with BMP2. Interacts with heterodimers composed of BMP2 and BMP6 in vitro, the interaction inhibits the heterodimer binding to its receptor BMPR1A /ALK3 and thereby suppresses expression of HAMP. N-glycosylated; required for secretion of the mature protein. As to expression, expressed in the soleus muscle in the leg (at protein level). Found in blood (at protein level). Weakly expressed in the heart (at protein level). Predominantly expressed in skeletal muscle and, at much lower levels, in other tissues, including lung, eye, smooth muscle, brain and kidney. Within skeletal muscles, higher expression levels in soleus as compared with plantaris. Expressed in osteoblasts, mature osteoclasts and erythroblasts. When fasting, females tend to have higher circulating levels than males. Obese mice tend to have lower expression and circulating levels as compared to lean animals. Following EPO treatment, only expressed in bone marrow and spleen.

It localises to the secreted. Iron-regulatory hormone that acts as an erythroid regulator after hemorrhage: produced by erythroblasts following blood loss and mediates suppression of hepcidin (HAMP) expression in the liver, thereby promoting increased iron absorption and mobilization from stores. Promotes lipid uptake into adipocytes and hepatocytes via transcriptional up-regulation of genes involved in fatty acid uptake. Inhibits apoptosis and inflammatory response in cardiomyocytes via promotion of sphingosine-1-phosphate (S1P) and cAMP-dependent activation of AKT signaling. Inhibits autophagy induced by nutrient deficiency in hepatocytes via promoting the phosphorylation of IRS1, AKT, and MTOR, and thereby subsequent activation of the AKT-MTOR signaling pathway. Negatively regulates the differentiation of osteoblasts, potentially via sequestering BMP2, and thereby inhibits the activation of SMAD signaling. The reduction in BMP2 signaling in osteoblasts also results in an increase in expression of the osteoclastogenesis-promoting factors TNFSF11/RANKL and SOST, thereby indirectly promotes bone resorption. This is Erythroferrone from Mus musculus (Mouse).